A 215-amino-acid polypeptide reads, in one-letter code: MSDMRRPIIAREGWPFVGALVALAVLALFVHWALGAVLAGLALFVMWFFRDPERPIPREDGLVVSPADGRVMFVREVEEPRFVGGRALLVSIFLSVFDVHINRSPVAGEVTYREYVPGKFLAAWDDTVGEVNERAYLGLVTDGGHRVLVSQVAGLLARRIVTWPAVGDRLDRGQRFGLIRFGSCTQVWLPADSEVLVRPGDRVVAGQTVIGRLPQ.

The Schiff-base intermediate with substrate; via pyruvic acid role is filled by serine 183. A Pyruvic acid (Ser); by autocatalysis modification is found at serine 183.

This sequence belongs to the phosphatidylserine decarboxylase family. PSD-A subfamily. In terms of assembly, heterodimer of a large membrane-associated beta subunit and a small pyruvoyl-containing alpha subunit. It depends on pyruvate as a cofactor. Post-translationally, is synthesized initially as an inactive proenzyme. Formation of the active enzyme involves a self-maturation process in which the active site pyruvoyl group is generated from an internal serine residue via an autocatalytic post-translational modification. Two non-identical subunits are generated from the proenzyme in this reaction, and the pyruvate is formed at the N-terminus of the alpha chain, which is derived from the carboxyl end of the proenzyme. The post-translation cleavage follows an unusual pathway, termed non-hydrolytic serinolysis, in which the side chain hydroxyl group of the serine supplies its oxygen atom to form the C-terminus of the beta chain, while the remainder of the serine residue undergoes an oxidative deamination to produce ammonia and the pyruvoyl prosthetic group on the alpha chain.

It localises to the cell membrane. The catalysed reaction is a 1,2-diacyl-sn-glycero-3-phospho-L-serine + H(+) = a 1,2-diacyl-sn-glycero-3-phosphoethanolamine + CO2. It functions in the pathway phospholipid metabolism; phosphatidylethanolamine biosynthesis; phosphatidylethanolamine from CDP-diacylglycerol: step 2/2. In terms of biological role, catalyzes the formation of phosphatidylethanolamine (PtdEtn) from phosphatidylserine (PtdSer). This Symbiobacterium thermophilum (strain DSM 24528 / JCM 14929 / IAM 14863 / T) protein is Phosphatidylserine decarboxylase proenzyme.